Consider the following 123-residue polypeptide: Putative hypoxanthine phosphoribosyltransferase (123 aa).

In terms of biological role, may play a role in purine salvage. The chain is Putative hypoxanthine phosphoribosyltransferase from Methanosarcina mazei (strain ATCC BAA-159 / DSM 3647 / Goe1 / Go1 / JCM 11833 / OCM 88) (Methanosarcina frisia).